We begin with the raw amino-acid sequence, 1141 residues long: Eukaryotic translation initiation factor 3 subunit A (1141 aa).

A PCI domain is found at 319–501 (LQRMAAHVLL…NSIYFGTDLT (183 aa)). Composition is skewed to basic and acidic residues over residues 588 to 623 (QNNA…EERE) and 829 to 899 (AAEE…RGGD). Disordered stretches follow at residues 588-631 (QNNA…QNEI) and 829-1141 (AAEE…VKRR). Phosphoserine is present on Ser-908. 4 stretches are compositionally biased toward basic and acidic residues: residues 920–976 (ERND…EPDT), 990–1051 (SRDD…EPQR), 1059–1087 (DAPR…RGDQ), and 1110–1131 (TREE…KAGD).

It belongs to the eIF-3 subunit A family. As to quaternary structure, component of the eukaryotic translation initiation factor 3 (eIF-3) complex. The eIF-3 complex interacts with pix.

It localises to the cytoplasm. In terms of biological role, RNA-binding component of the eukaryotic translation initiation factor 3 (eIF-3) complex, which is involved in protein synthesis of a specialized repertoire of mRNAs and, together with other initiation factors, stimulates binding of mRNA and methionyl-tRNAi to the 40S ribosome. The eIF-3 complex specifically targets and initiates translation of a subset of mRNAs involved in cell proliferation. The protein is Eukaryotic translation initiation factor 3 subunit A of Drosophila simulans (Fruit fly).